A 570-amino-acid polypeptide reads, in one-letter code: Periplasmic trehalase (570 aa).

The signal sequence occupies residues 1 to 34; that stretch reads MIPPEIRRSVLLQKAIKLALAGTLLTFASFSATA. Substrate-binding positions include R159, 166–167, N203, 212–214, 284–286, and G317; these read WD, RSQ, and RPE. Active-site proton donor/acceptor residues include D319 and E503. E518 contacts substrate. Residues 544 to 570 form a disordered region; that stretch reads KPCDSVPSTRPASLSATPTKTPSAATQ. Low complexity predominate over residues 554-570; that stretch reads PASLSATPTKTPSAATQ.

This sequence belongs to the glycosyl hydrolase 37 family. Monomer.

The protein resides in the periplasm. It carries out the reaction alpha,alpha-trehalose + H2O = alpha-D-glucose + beta-D-glucose. Functionally, provides the cells with the ability to utilize trehalose at high osmolarity by splitting it into glucose molecules that can subsequently be taken up by the phosphotransferase-mediated uptake system. The polypeptide is Periplasmic trehalase (Salmonella schwarzengrund (strain CVM19633)).